Here is a 160-residue protein sequence, read N- to C-terminus: SsrA-binding protein (160 aa).

The protein belongs to the SmpB family.

It localises to the cytoplasm. In terms of biological role, required for rescue of stalled ribosomes mediated by trans-translation. Binds to transfer-messenger RNA (tmRNA), required for stable association of tmRNA with ribosomes. tmRNA and SmpB together mimic tRNA shape, replacing the anticodon stem-loop with SmpB. tmRNA is encoded by the ssrA gene; the 2 termini fold to resemble tRNA(Ala) and it encodes a 'tag peptide', a short internal open reading frame. During trans-translation Ala-aminoacylated tmRNA acts like a tRNA, entering the A-site of stalled ribosomes, displacing the stalled mRNA. The ribosome then switches to translate the ORF on the tmRNA; the nascent peptide is terminated with the 'tag peptide' encoded by the tmRNA and targeted for degradation. The ribosome is freed to recommence translation, which seems to be the essential function of trans-translation. The protein is SsrA-binding protein of Novosphingobium aromaticivorans (strain ATCC 700278 / DSM 12444 / CCUG 56034 / CIP 105152 / NBRC 16084 / F199).